A 284-amino-acid chain; its full sequence is Tegument protein VP22 (284 aa).

Disordered regions lie at residues 1 to 126 and 239 to 284; these read MSYY…WSID and LYAS…SRRR. Over residues 74-83 the composition is skewed to basic and acidic residues; that stretch reads SRDDDDRRQP. Positions 94-108 are enriched in basic residues; that stretch reads ERRKSQTTVTTRRKT. Over residues 115 to 126 the composition is skewed to polar residues; that stretch reads KSSNSNGPWSID.

The protein belongs to the alphaherpesvirinae VP22 tegument protein family. In terms of assembly, interacts with gE (via C-terminus); this interaction is necessary for the recruitment of VP22 to the Golgi and its packaging into virions. Interacts with gM (via C-terminus). Interacts with VP16; this interaction allows the formation of a tripartite complex composed of VP16, VP22 and UL41/VHS. Interacts with the capsid-binding protein UL16. Interacts with host CGAS. Post-translationally, highly phosphorylated in the host cell. Packaging is selective for underphosphorylated forms.

The protein localises to the virion tegument. It is found in the host cytoplasm. Its subcellular location is the host nucleus. The protein resides in the host Golgi apparatus. Tegument protein that plays different roles during the time course of infection. Participates in both the accumulation of viral mRNAs and viral protein translation at late time of infection. Modulates the RNase activity of the virion host shutoff protein UL41 probably to ensure necessary levels of key cellular mRNAs and proteins. Plays a role in microtubule reorganization that occurs after viral infection by stabilizing microtubule network. Plays a role in the inhibition of host innate immune system by targeting the CGAS enzymatic activity which is the principal cytosolic DNA sensor that detects invading viral DNA. Acts by mediating disruption of liquid-like droplets in which CGAS is activated, thereby preventing CGAS activity. The chain is Tegument protein VP22 (UL49) from Amazona oratrix (yellow-headed parrot).